The chain runs to 252 residues: Thiazole synthase (252 aa).

K91 functions as the Schiff-base intermediate with DXP in the catalytic mechanism. 1-deoxy-D-xylulose 5-phosphate contacts are provided by residues G152, 179-180, and 201-202; these read AG and NT.

The protein belongs to the ThiG family. In terms of assembly, homotetramer. Forms heterodimers with either ThiH or ThiS.

It localises to the cytoplasm. The catalysed reaction is [ThiS sulfur-carrier protein]-C-terminal-Gly-aminoethanethioate + 2-iminoacetate + 1-deoxy-D-xylulose 5-phosphate = [ThiS sulfur-carrier protein]-C-terminal Gly-Gly + 2-[(2R,5Z)-2-carboxy-4-methylthiazol-5(2H)-ylidene]ethyl phosphate + 2 H2O + H(+). It participates in cofactor biosynthesis; thiamine diphosphate biosynthesis. Its function is as follows. Catalyzes the rearrangement of 1-deoxy-D-xylulose 5-phosphate (DXP) to produce the thiazole phosphate moiety of thiamine. Sulfur is provided by the thiocarboxylate moiety of the carrier protein ThiS. In vitro, sulfur can be provided by H(2)S. The sequence is that of Thiazole synthase from Erwinia pyrifoliae (strain DSM 12162 / Ep1/96).